The primary structure comprises 239 residues: Splicing factor U2AF 35 kDa subunit (239 aa).

Ala-2 carries the post-translational modification N-acetylalanine. Residues 12–40 (EKDKVNCSFYFKIGACRHGDRCSRLHNKP) form a C3H1-type 1 zinc finger. Position 39 is an N6-methyllysine (Lys-39). A phosphoserine mark is found at Ser-61 and Ser-145. The RRM domain occupies 65–147 (LRCAVSDVEM…QPIHAELSPV (83 aa)). The segment at 149 to 176 (DFREACCRQYEMGECTRGGFCNFMHLKP) adopts a C3H1-type 2 zinc-finger fold. At Arg-165 the chain carries Omega-N-methylarginine. The segment at 183-239 (RELYGRRRKKHRSRSRSRERRSRSRDRGRGGGGGGGGGGGRERDRRRSRDRERSGRF) is disordered. The segment covering 188–208 (RRRKKHRSRSRSRERRSRSRD) has biased composition (basic residues). Gly residues predominate over residues 212–221 (GGGGGGGGGG). The span at 222–239 (GRERDRRRSRDRERSGRF) shows a compositional bias: basic and acidic residues.

It belongs to the splicing factor SR family. In terms of assembly, identified in the spliceosome C complex. Heterodimer with U2AF2. Interacts (via RS domain) with PHF5A (via N-terminus). Interacts with ZRANB2. Interacts with SDE2. Interacts with SF3B1. As to expression, expressed in primary spermatocytes and elongating spermatids (at protein level).

The protein localises to the nucleus. It localises to the nucleus speckle. Functionally, plays a critical role in both constitutive and enhancer-dependent splicing by mediating protein-protein interactions and protein-RNA interactions required for accurate 3'-splice site selection. Recruits U2 snRNP to the branch point. Directly mediates interactions between U2AF2 and proteins bound to the enhancers and thus may function as a bridge between U2AF2 and the enhancer complex to recruit it to the adjacent intron. The chain is Splicing factor U2AF 35 kDa subunit (U2af1) from Mus musculus (Mouse).